The primary structure comprises 639 residues: Elongation factor 4 (639 aa).

Positions 39–220 (AQIRNFCIIA…EVVRLVPPPT (182 aa)) constitute a tr-type G domain. GTP-binding positions include 51–56 (DHGKST) and 167–170 (NKID).

This sequence belongs to the TRAFAC class translation factor GTPase superfamily. Classic translation factor GTPase family. LepA subfamily.

The protein resides in the cell membrane. It catalyses the reaction GTP + H2O = GDP + phosphate + H(+). Its function is as follows. Required for accurate and efficient protein synthesis under certain stress conditions. May act as a fidelity factor of the translation reaction, by catalyzing a one-codon backward translocation of tRNAs on improperly translocated ribosomes. Back-translocation proceeds from a post-translocation (POST) complex to a pre-translocation (PRE) complex, thus giving elongation factor G a second chance to translocate the tRNAs correctly. Binds to ribosomes in a GTP-dependent manner. The protein is Elongation factor 4 of Mycobacterium sp. (strain JLS).